Reading from the N-terminus, the 360-residue chain is Phospho-N-acetylmuramoyl-pentapeptide-transferase (360 aa).

Helical transmembrane passes span 25-45, 73-93, 97-117, 132-152, 168-188, 199-219, 236-256, 263-283, 288-308, and 338-358; these read RGIL…PWMI, TMGG…WADL, YVWV…VDDY, WKYF…YMTA, VSIP…VGSS, GLAI…CYLS, AGEL…FLWF, VFMG…IAVI, VVLF…IIQV, and VIVR…ATLK.

This sequence belongs to the glycosyltransferase 4 family. MraY subfamily. Mg(2+) serves as cofactor.

It localises to the cell inner membrane. The catalysed reaction is UDP-N-acetyl-alpha-D-muramoyl-L-alanyl-gamma-D-glutamyl-meso-2,6-diaminopimeloyl-D-alanyl-D-alanine + di-trans,octa-cis-undecaprenyl phosphate = di-trans,octa-cis-undecaprenyl diphospho-N-acetyl-alpha-D-muramoyl-L-alanyl-D-glutamyl-meso-2,6-diaminopimeloyl-D-alanyl-D-alanine + UMP. It functions in the pathway cell wall biogenesis; peptidoglycan biosynthesis. Its function is as follows. Catalyzes the initial step of the lipid cycle reactions in the biosynthesis of the cell wall peptidoglycan: transfers peptidoglycan precursor phospho-MurNAc-pentapeptide from UDP-MurNAc-pentapeptide onto the lipid carrier undecaprenyl phosphate, yielding undecaprenyl-pyrophosphoryl-MurNAc-pentapeptide, known as lipid I. This Ectopseudomonas mendocina (strain ymp) (Pseudomonas mendocina) protein is Phospho-N-acetylmuramoyl-pentapeptide-transferase.